Reading from the N-terminus, the 396-residue chain is Tyrosine--tRNA ligase (396 aa).

The short motif at 43–52 (PTAPDIHLGH) is the 'HIGH' region element. The 'KMSKS' region motif lies at 227 to 231 (KMSKS). Lys-230 contributes to the ATP binding site. Residues 335 to 395 (IGLATLLKEA…GKRKFARVTV (61 aa)) form the S4 RNA-binding domain.

This sequence belongs to the class-I aminoacyl-tRNA synthetase family. TyrS type 2 subfamily. As to quaternary structure, homodimer.

It localises to the cytoplasm. It catalyses the reaction tRNA(Tyr) + L-tyrosine + ATP = L-tyrosyl-tRNA(Tyr) + AMP + diphosphate + H(+). Functionally, catalyzes the attachment of tyrosine to tRNA(Tyr) in a two-step reaction: tyrosine is first activated by ATP to form Tyr-AMP and then transferred to the acceptor end of tRNA(Tyr). The protein is Tyrosine--tRNA ligase of Haemophilus ducreyi (strain 35000HP / ATCC 700724).